Consider the following 189-residue polypeptide: MILMKDIVRDDQEGTVLRDYAAKVSFPLTEEEQQLAKDLMEYLEISQDEELAEKYGLRAGVGLAAPQVNVSKQMAAVLVPSDDEEDDTPIFKDVIINPVIISESVQMGALTEGEGCLSVDRDIAGYVPRHDRITLKYQDVQGETHKVRLKHYPAIVCQHEIDHLHGVLFYDHINKDNPFEAPEGTVFFG.

Fe cation-binding residues include cysteine 116 and histidine 159. Glutamate 160 is an active-site residue. Histidine 163 lines the Fe cation pocket.

Belongs to the polypeptide deformylase family. It depends on Fe(2+) as a cofactor.

The catalysed reaction is N-terminal N-formyl-L-methionyl-[peptide] + H2O = N-terminal L-methionyl-[peptide] + formate. In terms of biological role, removes the formyl group from the N-terminal Met of newly synthesized proteins. Requires at least a dipeptide for an efficient rate of reaction. N-terminal L-methionine is a prerequisite for activity but the enzyme has broad specificity at other positions. This chain is Peptide deformylase, found in Limosilactobacillus fermentum (strain NBRC 3956 / LMG 18251) (Lactobacillus fermentum).